Consider the following 416-residue polypeptide: Gamma-glutamyl phosphate reductase (416 aa).

This sequence belongs to the gamma-glutamyl phosphate reductase family.

It localises to the cytoplasm. It carries out the reaction L-glutamate 5-semialdehyde + phosphate + NADP(+) = L-glutamyl 5-phosphate + NADPH + H(+). The protein operates within amino-acid biosynthesis; L-proline biosynthesis; L-glutamate 5-semialdehyde from L-glutamate: step 2/2. In terms of biological role, catalyzes the NADPH-dependent reduction of L-glutamate 5-phosphate into L-glutamate 5-semialdehyde and phosphate. The product spontaneously undergoes cyclization to form 1-pyrroline-5-carboxylate. The chain is Gamma-glutamyl phosphate reductase from Actinobacillus succinogenes (strain ATCC 55618 / DSM 22257 / CCUG 43843 / 130Z).